Reading from the N-terminus, the 327-residue chain is Malate dehydrogenase (327 aa).

11–17 (GAAGNIS) provides a ligand contact to NAD(+). Substrate is bound by residues arginine 92 and arginine 98. NAD(+) is bound by residues asparagine 105, glutamine 112, and 129-131 (VGN). The substrate site is built by asparagine 131 and arginine 162. Catalysis depends on histidine 187, which acts as the Proton acceptor. A disordered region spans residues 304–327 (SQEKMKATEQELSEERDAVEHLLP).

It belongs to the LDH/MDH superfamily. MDH type 2 family.

It catalyses the reaction (S)-malate + NAD(+) = oxaloacetate + NADH + H(+). In terms of biological role, catalyzes the reversible oxidation of malate to oxaloacetate. In Psychrobacter sp. (strain PRwf-1), this protein is Malate dehydrogenase.